Consider the following 149-residue polypeptide: Oligosaccharyltransferase complex subunit OSTC (149 aa).

Residues 1-32 (MESLYRVPFLVLECPNLKLKKPPWVHMPSAMT) are Cytoplasmic-facing. Residues 33–53 (VYALVVVSYFLITGGIIYDVI) form a helical membrane-spanning segment. Residues 54–83 (VEPPSVGSVTDEHGHQRPVAFLAYRVNGQY) lie on the Extracellular side of the membrane. A helical transmembrane segment spans residues 84-104 (IMEGLASSFLFTMGGLGFIIL). Residues 105-117 (DRSNAPNIPKLNR) lie on the Cytoplasmic side of the membrane. A helical transmembrane segment spans residues 118–138 (FLLLFIGFVCVLLSFFMARVF). Residues 139-149 (MRMKLPGYLMG) lie on the Extracellular side of the membrane.

Belongs to the OSTC family. Component of STT3A-containing oligosaccharyl transferase (OST-A) complex. STT3A-containing complex assembly occurs through the formation of 3 subcomplexes. Subcomplex 1 contains RPN1 and TMEM258, subcomplex 2 contains the STT3A-specific subunits STT3A, DC2/OSTC, and KCP2 as well as the core subunit OST4, and subcomplex 3 contains RPN2, DAD1, and OST48. The OST-A complex can form stable complexes with the Sec61 complex or with both the Sec61 and TRAP complexes. Interacts with PSEN1 and NCSTN; indicative for an association with the gamma-secretase complex.

Its subcellular location is the endoplasmic reticulum. It localises to the membrane. The protein operates within protein modification; protein glycosylation. Functionally, subunit of STT3A-containing oligosaccharyl transferase (OST-A) complex that catalyzes the initial transfer of a defined glycan (Glc(3)Man(9)GlcNAc(2) in eukaryotes) from the lipid carrier dolichol-pyrophosphate to an asparagine residue within an Asn-X-Ser/Thr consensus motif in nascent polypeptide chains, the first step in protein N-glycosylation. N-glycosylation occurs cotranslationally and the complex associates with the Sec61 complex at the channel-forming translocon complex that mediates protein translocation across the endoplasmic reticulum (ER). Within the OST-A complex, acts as an adapter that anchors the OST-A complex to the Sec61 complex. May be involved in N-glycosylation of APP (amyloid-beta precursor protein). Can modulate gamma-secretase cleavage of APP by enhancing endoprotelysis of PSEN1. In Bos taurus (Bovine), this protein is Oligosaccharyltransferase complex subunit OSTC.